Consider the following 375-residue polypeptide: Leucoanthocyanidin dioxygenase 1 (375 aa).

Positions 218–317 constitute a Fe2OG dioxygenase domain; sequence LLLQLKINYY…RLSWVVFCEP (100 aa). Residues His242, Asp244, and His298 each coordinate Fe cation. Arg308 serves as a coordination point for 2-oxoglutarate.

It belongs to the iron/ascorbate-dependent oxidoreductase family. It depends on L-ascorbate as a cofactor. Fe(2+) is required as a cofactor.

The catalysed reaction is a (2R,3S,4S)-leucoanthocyanidin + 2-oxoglutarate + O2 = a 4-H-anthocyanidin with a 3-hydroxy group + succinate + CO2 + 2 H2O. Its pathway is pigment biosynthesis; anthocyanin biosynthesis. Its function is as follows. Involved in anthocyanin and protoanthocyanidin biosynthesis by catalyzing the oxidation of leucoanthocyanidins into anthocyanidins. Is able to synthesize anthocyanin pigments from leucoanthocyanidins in aleurone tissue. Converts dihydroquercetin to quercetin in vitro. This is Leucoanthocyanidin dioxygenase 1 from Oryza sativa subsp. indica (Rice).